Here is a 205-residue protein sequence, read N- to C-terminus: Probable thymidylate kinase (205 aa).

9–16 (GIDGVGKS) provides a ligand contact to ATP.

This sequence belongs to the thymidylate kinase family.

The enzyme catalyses dTMP + ATP = dTDP + ADP. The polypeptide is Probable thymidylate kinase (Caldivirga maquilingensis (strain ATCC 700844 / DSM 13496 / JCM 10307 / IC-167)).